The primary structure comprises 372 residues: NAD(P)H-quinone oxidoreductase subunit 1 (372 aa).

8 consecutive transmembrane segments (helical) span residues 27–47, 97–117, 128–148, 176–196, 204–224, 266–286, 308–328, and 347–367; these read IIWLPLPMLIVLVSAVVGVLV, ILFTTGPILVLVPVILSWLIV, VGIGIFLWIALSSIQPIGLLM, LALSVLAVVLMTNSLSTIDIV, ILSWNIWRQPVGFIIFWICAL, ILSALLVSILYLGGWGFPIPV, SIGIIMTVLKAYLLVFIAILL, and FLLPISLANLLLTAGLKLALP.

The protein belongs to the complex I subunit 1 family. NDH-1 is composed of at least 11 different subunits.

The protein localises to the cellular thylakoid membrane. It catalyses the reaction a plastoquinone + NADH + (n+1) H(+)(in) = a plastoquinol + NAD(+) + n H(+)(out). It carries out the reaction a plastoquinone + NADPH + (n+1) H(+)(in) = a plastoquinol + NADP(+) + n H(+)(out). Its function is as follows. NDH-1 shuttles electrons from an unknown electron donor, via FMN and iron-sulfur (Fe-S) centers, to quinones in the respiratory and/or the photosynthetic chain. The immediate electron acceptor for the enzyme in this species is believed to be plastoquinone. Couples the redox reaction to proton translocation, and thus conserves the redox energy in a proton gradient. This chain is NAD(P)H-quinone oxidoreductase subunit 1, found in Prochlorococcus marinus (strain MIT 9515).